The primary structure comprises 192 residues: Fe/S biogenesis protein NfuA (192 aa).

[4Fe-4S] cluster is bound by residues Cys149 and Cys152.

It belongs to the NfuA family. In terms of assembly, homodimer. The cofactor is [4Fe-4S] cluster.

Its function is as follows. Involved in iron-sulfur cluster biogenesis. Binds a 4Fe-4S cluster, can transfer this cluster to apoproteins, and thereby intervenes in the maturation of Fe/S proteins. Could also act as a scaffold/chaperone for damaged Fe/S proteins. The sequence is that of Fe/S biogenesis protein NfuA from Tolumonas auensis (strain DSM 9187 / NBRC 110442 / TA 4).